Here is a 101-residue protein sequence, read N- to C-terminus: NADH-quinone oxidoreductase subunit K (101 aa).

3 helical membrane-spanning segments follow: residues 4-24 (LPHYLVVAAILFTIGVFGIFV), 30-50 (IVILMSIELILLAVNINLVAF), and 61-81 (IFAMFVLTVAAAEAAVGLAIL).

It belongs to the complex I subunit 4L family. As to quaternary structure, NDH-1 is composed of 14 different subunits. Subunits NuoA, H, J, K, L, M, N constitute the membrane sector of the complex.

It is found in the cell inner membrane. It catalyses the reaction a quinone + NADH + 5 H(+)(in) = a quinol + NAD(+) + 4 H(+)(out). In terms of biological role, NDH-1 shuttles electrons from NADH, via FMN and iron-sulfur (Fe-S) centers, to quinones in the respiratory chain. The immediate electron acceptor for the enzyme in this species is believed to be ubiquinone. Couples the redox reaction to proton translocation (for every two electrons transferred, four hydrogen ions are translocated across the cytoplasmic membrane), and thus conserves the redox energy in a proton gradient. The chain is NADH-quinone oxidoreductase subunit K from Caulobacter vibrioides (strain ATCC 19089 / CIP 103742 / CB 15) (Caulobacter crescentus).